We begin with the raw amino-acid sequence, 956 residues long: DNA replication helicase (956 aa).

Residue glycine 120–threonine 127 participates in ATP binding. The interval proline 658 to serine 694 is disordered. The segment covering serine 667–glutamine 678 has biased composition (low complexity). Residues arginine 679–serine 694 are compositionally biased toward basic and acidic residues.

This sequence belongs to the herpesviridae helicase family. In terms of assembly, associates with the primase and the primase-associated factor to form the helicase-primase complex.

The protein localises to the host nucleus. Functionally, component of the helicase/primase complex. Unwinds the DNA at the replication forks and generates single-stranded DNA for both leading and lagging strand synthesis. The primase synthesizes short RNA primers on the lagging strand that the polymerase elongates using dNTPs. Possesses helicase-like motifs and therefore may act as the helicase subunit of the complex. This chain is DNA replication helicase, found in Human cytomegalovirus (strain AD169) (HHV-5).